The primary structure comprises 228 residues: Ribosomal RNA small subunit methyltransferase G (228 aa).

S-adenosyl-L-methionine is bound by residues Gly70, 121–122, and Arg138; that span reads AE.

The protein belongs to the methyltransferase superfamily. RNA methyltransferase RsmG family.

Its subcellular location is the cytoplasm. In terms of biological role, specifically methylates the N7 position of a guanine in 16S rRNA. The sequence is that of Ribosomal RNA small subunit methyltransferase G from Thermotoga petrophila (strain ATCC BAA-488 / DSM 13995 / JCM 10881 / RKU-1).